The primary structure comprises 248 residues: Serine/arginine-rich splicing factor 1 (248 aa).

At Ser-2 the chain carries N-acetylserine. Ser-2 bears the Phosphoserine mark. The RRM 1 domain occupies 16–91 (CRIYVGNLPP…YRLRVEFPRS (76 aa)). Lys-30 participates in a covalent cross-link: Glycyl lysine isopeptide (Lys-Gly) (interchain with G-Cter in SUMO2). At Lys-38 the chain carries N6-acetyllysine; alternate. Residue Lys-38 forms a Glycyl lysine isopeptide (Lys-Gly) (interchain with G-Cter in SUMO2); alternate linkage. The disordered stretch occupies residues 88-134 (FPRSGRGTGRGGGGGGGGGAPRGRYGPPSRRSENRVVVSGLPPSGSW). Residues Arg-93, Arg-97, and Arg-109 each carry the asymmetric dimethylarginine; alternate modification. An omega-N-methylarginine; alternate mark is found at Arg-93, Arg-97, and Arg-109. Residues 93–108 (RGTGRGGGGGGGGGAP) are compositionally biased toward gly residues. Arg-111 bears the Omega-N-methylarginine mark. The RRM 2 domain maps to 121-195 (NRVVVSGLPP…ETAYIRVKVD (75 aa)). A Phosphoserine modification is found at Ser-133. Lys-179 is subject to N6-acetyllysine. Residues 191 to 248 (RVKVDGPRSPSYGRSRSRSRSRSRNRSRSNSRSRSYSPRRSRGSPRYSPRHSRSRSRT) form a disordered region. The tract at residues 198 to 247 (RSPSYGRSRSRSRSRSRNRSRSNSRSRSYSPRRSRGSPRYSPRHSRSRSR) is interaction with SAFB1. Residues Ser-199 and Ser-201 each carry the phosphoserine modification. A Phosphotyrosine modification is found at Tyr-202. Ser-205, Ser-207, Ser-209, Ser-231, Ser-234, and Ser-238 each carry phosphoserine. Residues 205–248 (SRSRSRSRSRNRSRSNSRSRSYSPRRSRGSPRYSPRHSRSRSRT) are compositionally biased toward basic residues.

Belongs to the splicing factor SR family. As to quaternary structure, consists of two polypeptides of p32 and p33. Identified in the spliceosome C complex. Component of a ribonucleoprotein complex containing mRNAs and RNA-binding proteins including DDX5, HNRNPH2 and SRSF1 as well as splicing regulator ARVCF. In vitro, self-associates and binds SRSF2, SNRNP70 and U2AF1 but not U2AF2. Binds SREK1/SFRS12. Interacts with SAFB/SAFB1. Interacts with PSIP1/LEDGF. Interacts with RSRC1 (via Arg/Ser-rich domain). Interacts with ZRSR2/U2AF1-RS2. Interacts with CCDC55 (via C-terminus). Interacts with SRPK1 and a sliding docking interaction is essential for its sequential and processive phosphorylation by SRPK1. Interacts with NXF1. Interacts with CCNL1, CCNL2 and CDK11B. Interacts with RRP1B. Interacts (when phosphorylated in its RS domain) with TNPO3; promoting nuclear import. Interacts with ILDR1 (via C-terminus) and ILDR2. Phosphorylated by CLK1, CLK2, CLK3 and CLK4. Phosphorylated by SRPK1 at multiple serines in its RS domain via a directional (C-terminal to N-terminal) and a dual-track mechanism incorporating both processive phosphorylation (in which the kinase stays attached to the substrate after each round of phosphorylation) and distributive phosphorylation steps (in which the kinase and substrate dissociate after each phosphorylation event). The RS domain of SRSF1 binds to a docking groove in the large lobe of the kinase domain of SRPK1 and this induces certain structural changes in SRPK1 and/or RRM 2 domain of SRSF1, allowing RRM 2 to bind the kinase and initiate phosphorylation. The cycles continue for several phosphorylation steps in a processive manner (steps 1-8) until the last few phosphorylation steps (approximately steps 9-12). During that time, a mechanical stress induces the unfolding of the beta-4 motif in RRM 2, which then docks at the docking groove of SRPK1. This also signals RRM 2 to begin to dissociate, which facilitates SRSF1 dissociation after phosphorylation is completed. In terms of processing, asymmetrically dimethylated at arginines, probably by PRMT1, methylation promotes localization to nuclear speckles.

It localises to the cytoplasm. Its subcellular location is the nucleus speckle. Functionally, plays a role in preventing exon skipping, ensuring the accuracy of splicing and regulating alternative splicing. Interacts with other spliceosomal components, via the RS domains, to form a bridge between the 5'- and 3'-splice site binding components, U1 snRNP and U2AF. Can stimulate binding of U1 snRNP to a 5'-splice site-containing pre-mRNA. Binds to purine-rich RNA sequences, either the octamer, 5'-RGAAGAAC-3' (r=A or G) or the decamers, AGGACAGAGC/AGGACGAAGC. Binds preferentially to the 5'-CGAGGCG-3' motif in vitro. Three copies of the octamer constitute a powerful splicing enhancer in vitro, the ASF/SF2 splicing enhancer (ASE) which can specifically activate ASE-dependent splicing. May function as export adapter involved in mRNA nuclear export through the TAP/NXF1 pathway. The sequence is that of Serine/arginine-rich splicing factor 1 (SRSF1) from Pongo abelii (Sumatran orangutan).